We begin with the raw amino-acid sequence, 305 residues long: Tyrosine recombinase XerC (305 aa).

Residues 4 to 95 form the Core-binding (CB) domain; the sequence is TSIQALINKW…AVKNFYRFLE (92 aa). One can recognise a Tyr recombinase domain in the interval 116 to 298; it reads LLPKALSEDD…SIKHLEAVYT (183 aa). Residues R159, K182, H250, R253, and H276 contribute to the active site. The active-site O-(3'-phospho-DNA)-tyrosine intermediate is Y285.

This sequence belongs to the 'phage' integrase family. XerC subfamily. In terms of assembly, forms a cyclic heterotetrameric complex composed of two molecules of XerC and two molecules of XerD.

Its subcellular location is the cytoplasm. Site-specific tyrosine recombinase, which acts by catalyzing the cutting and rejoining of the recombining DNA molecules. The XerC-XerD complex is essential to convert dimers of the bacterial chromosome into monomers to permit their segregation at cell division. It also contributes to the segregational stability of plasmids. The polypeptide is Tyrosine recombinase XerC (Rickettsia massiliae (strain Mtu5)).